Reading from the N-terminus, the 672-residue chain is Glycerophosphocholine phosphodiesterase GPCPD1 (672 aa).

In terms of domain architecture, CBM20 spans 1–115 (MTPSQVAFEI…IIIDDGQFGI (115 aa)). Residues K70 and 88-89 (HK) contribute to the substrate site. Phosphoserine occurs at positions 175 and 424. The GP-PDE domain maps to 318–618 (PLDVGHRGAG…DRIYDWMPEQ (301 aa)). Y608 bears the Phosphotyrosine mark.

Belongs to the glycerophosphoryl diester phosphodiesterase family. Widely expressed, with highest expression in spinal chord.

It localises to the cytoplasm. Its subcellular location is the cytosol. It carries out the reaction sn-glycerol 3-phosphocholine + H2O = sn-glycerol 3-phosphate + choline + H(+). Its function is as follows. May be involved in the negative regulation of skeletal muscle differentiation, independently of its glycerophosphocholine phosphodiesterase activity. The sequence is that of Glycerophosphocholine phosphodiesterase GPCPD1 (GPCPD1) from Homo sapiens (Human).